A 102-amino-acid chain; its full sequence is Large ribosomal subunit protein eL30 (102 aa).

The protein belongs to the eukaryotic ribosomal protein eL30 family. In terms of assembly, part of the 50S ribosomal subunit.

The polypeptide is Large ribosomal subunit protein eL30 (Thermococcus kodakarensis (strain ATCC BAA-918 / JCM 12380 / KOD1) (Pyrococcus kodakaraensis (strain KOD1))).